A 147-amino-acid chain; its full sequence is Microsomal glutathione S-transferase 2 (147 aa).

The next 3 helical transmembrane spans lie at 6–26, 62–82, and 107–127; these read SLLAAVSLLSACQQSYFAWRV, VFIVMLWMAGWYFNQVFAACL, and GFRLSLGILTLLPVLAVLGVA.

As to quaternary structure, homotrimer.

The protein resides in the endoplasmic reticulum membrane. Its subcellular location is the microsome membrane. It catalyses the reaction RX + glutathione = an S-substituted glutathione + a halide anion + H(+). It carries out the reaction 1-chloro-2,4-dinitrobenzene + glutathione = 2,4-dinitrophenyl-S-glutathione + chloride + H(+). The catalysed reaction is leukotriene C4 = leukotriene A4 + glutathione. The enzyme catalyses (5S)-hydroperoxy-(6E,8Z,11Z,14Z)-eicosatetraenoate + 2 glutathione = (5S)-hydroxy-(6E,8Z,11Z,14Z)-eicosatetraenoate + glutathione disulfide + H2O. Each monomer binds on GSH molecule but only one subunit is catalytically active. In terms of biological role, catalyzes several different glutathione-dependent reactions. Catalyzes the glutathione-dependent reduction of lipid hydroperoxides, such as 5-HPETE. Has glutathione transferase activity, toward xenobiotic electrophiles, such as 1-chloro-2, 4-dinitrobenzene (CDNB). Also catalyzes the conjugation of leukotriene A4 with reduced glutathione to form leukotriene C4 (LTC4). Involved in oxidative DNA damage induced by ER stress and anticancer agents by activating LTC4 biosynthetic machinery in nonimmune cells. This chain is Microsomal glutathione S-transferase 2, found in Mus musculus (Mouse).